The sequence spans 82 residues: Protein C14 (82 aa).

In Homo sapiens (Human), this protein is Protein C14.